The following is a 696-amino-acid chain: DNA-directed RNA polymerase subunit beta' (696 aa).

Zn(2+) contacts are provided by Cys-70, Cys-72, Cys-85, and Cys-88. Mg(2+) contacts are provided by Asp-540, Asp-542, and Asp-544.

It belongs to the RNA polymerase beta' chain family. RpoC1 subfamily. As to quaternary structure, in plastids the minimal PEP RNA polymerase catalytic core is composed of four subunits: alpha, beta, beta', and beta''. When a (nuclear-encoded) sigma factor is associated with the core the holoenzyme is formed, which can initiate transcription. Mg(2+) serves as cofactor. It depends on Zn(2+) as a cofactor.

The protein localises to the plastid. It is found in the chloroplast. The catalysed reaction is RNA(n) + a ribonucleoside 5'-triphosphate = RNA(n+1) + diphosphate. Its function is as follows. DNA-dependent RNA polymerase catalyzes the transcription of DNA into RNA using the four ribonucleoside triphosphates as substrates. The sequence is that of DNA-directed RNA polymerase subunit beta' from Phaeodactylum tricornutum (strain CCAP 1055/1).